We begin with the raw amino-acid sequence, 602 residues long: Potassium voltage-gated channel subfamily A member 5 (602 aa).

The disordered stretch occupies residues 1 to 107 (MEISLVPMEN…EDQAPQDSGS (107 aa)). The segment at 1–202 (MEISLVPMEN…FYQLGDEAME (202 aa)) is tetramerization domain. The Cytoplasmic portion of the chain corresponds to 1–238 (MEISLVPMEN…LIFEYPESSG (238 aa)). The segment covering 66–78 (PLPPMPQELPQPR) has biased composition (pro residues). Serine 81 carries the phosphoserine; by CK2 and PKA modification. Residue lysine 212 forms a Glycyl lysine isopeptide (Lys-Gly) (interchain with G-Cter in SUMO) linkage. Residues 239–260 (SARAIAIVSVLVILISIITFCL) form a helical membrane-spanning segment. The Extracellular segment spans residues 261 to 314 (ETLPEFRDERELLRHPPVPPQPPAPAPGANGSGSGVLSSGPTVAPLLPRTLADP). A disordered region spans residues 274–297 (RHPPVPPQPPAPAPGANGSGSGVL). A compositionally biased stretch (pro residues) spans 276–286 (PPVPPQPPAPA). Asparagine 290 carries N-linked (GlcNAc...) asparagine glycosylation. A helical transmembrane segment spans residues 315–336 (FFIVETTCVIWFTFELLVRFFA). Cysteine 337 carries the S-palmitoyl cysteine lipid modification. The Cytoplasmic segment spans residues 337–347 (CPSKAEFSRNI). A helical transmembrane segment spans residues 348-368 (MNIIDIVAIFPYFITLGTELA). Residues 369–384 (EQQPGGGGQNGQQAMS) lie on the Extracellular side of the membrane. The chain crosses the membrane as a helical; Voltage-sensor span at residues 385 to 405 (LAILRVIRLVRVFRIFKLSRH). Residues 406 to 420 (SKGLQILGKTLQASM) are Cytoplasmic-facing. Residues 407 to 420 (KGLQILGKTLQASM) form an S4-S5 linker region. The chain crosses the membrane as a helical span at residues 421–442 (RELGLLIFFLFIGVILFSSAVY). The Extracellular segment spans residues 443–456 (FAEADNQGSHFSSI). The helical intramembrane region spans 457-468 (PDAFWWAVVTMT). The Selectivity filter signature appears at 469 to 474 (TVGYGD). Residues 469 to 476 (TVGYGDMR) lie within the membrane without spanning it. The Extracellular segment spans residues 477-483 (PITVGGK). Residues 484 to 512 (IVGSLCAIAGVLTIALPVPVIVSNFNYFY) form a helical membrane-spanning segment. Topologically, residues 513–602 (HRETDHEEQA…CLDTSRETDL (90 aa)) are cytoplasmic. Residue lysine 525 forms a Glycyl lysine isopeptide (Lys-Gly) (interchain with G-Cter in SUMO) linkage. Phosphoserine; by PKA occurs at positions 535, 546, and 569. Residues 600–602 (TDL) carry the PDZ-binding motif.

It belongs to the potassium channel family. A (Shaker) (TC 1.A.1.2) subfamily. Kv1.5/KCNA5 sub-subfamily. Homotetramer and heterotetramer of potassium channel proteins. Interacts with DLG1, which enhances channel currents. Forms a ternary complex with DLG1 and CAV3. Interacts with KCNAB1. Interacts with UBE2I. Interacts with XIRP2; the interaction is required for normal action potential configuration in the heart. Post-translationally, glycosylated. In terms of processing, sumoylated on Lys-212, and Lys-525, preferentially with SUMO3. Sumoylation regulates the voltage sensitivity of the channel. As to expression, expressed in the heart (at protein level). Expressed in the brain and weakly expressed in the thymus, skeletal muscle and spleen.

The protein resides in the cell membrane. It catalyses the reaction K(+)(in) = K(+)(out). Voltage-gated potassium channel that mediates transmembrane potassium transport in excitable membranes. Forms tetrameric potassium-selective channels through which potassium ions pass in accordance with their electrochemical gradient. The channel alternates between opened and closed conformations in response to the voltage difference across the membrane. Can form functional homotetrameric channels and heterotetrameric channels that contain variable proportions of KCNA1, KCNA2, KCNA4, KCNA5, and possibly other family members as well; channel properties depend on the type of alpha subunits that are part of the channel. Channel properties are modulated by cytoplasmic beta subunits that regulate the subcellular location of the alpha subunits and promote rapid inactivation. Homotetrameric channels display rapid activation and slow inactivation. Required for normal electrical conduction including formation of the infranodal ventricular conduction system and normal action potential configuration, as a result of its interaction with XIRP2. May play a role in regulating the secretion of insulin in normal pancreatic islets. In terms of biological role, voltage-gated potassium channel that mediates transmembrane potassium transport in excitable membranes. Forms tetrameric potassium-selective channels through which potassium ions pass in accordance with their electrochemical gradient. The channel alternates between opened and closed conformations in response to the voltage difference across the membrane. Functionally, inactive. Inhibits expression of isoform 1 and isoform 2. The protein is Potassium voltage-gated channel subfamily A member 5 (Kcna5) of Mus musculus (Mouse).